The sequence spans 168 residues: Lipoprotein signal peptidase (168 aa).

3 helical membrane-spanning segments follow: residues 15–35 (AIAAVTVVLDQISKLWILGLL), 69–89 (WGRWLLIGFSILVVIGLAVWV), and 95–115 (PLLAVGIGLIIGGAIGNNLID). Catalysis depends on residues aspartate 124 and aspartate 141. The chain crosses the membrane as a helical span at residues 133-153 (FPWVFNIADSGISVGVALLLL).

It belongs to the peptidase A8 family.

It localises to the cell inner membrane. The catalysed reaction is Release of signal peptides from bacterial membrane prolipoproteins. Hydrolyzes -Xaa-Yaa-Zaa-|-(S,diacylglyceryl)Cys-, in which Xaa is hydrophobic (preferably Leu), and Yaa (Ala or Ser) and Zaa (Gly or Ala) have small, neutral side chains.. It functions in the pathway protein modification; lipoprotein biosynthesis (signal peptide cleavage). Its function is as follows. This protein specifically catalyzes the removal of signal peptides from prolipoproteins. This Caulobacter vibrioides (strain ATCC 19089 / CIP 103742 / CB 15) (Caulobacter crescentus) protein is Lipoprotein signal peptidase.